The chain runs to 247 residues: ATP synthase subunit a 1 (247 aa).

6 consecutive transmembrane segments (helical) span residues 32 to 52 (YMLL…RALV), 82 to 102 (FFPL…VGII), 112 to 132 (IIVT…YGFY), 141 to 161 (LFVP…IEII), 181 to 201 (GHVT…LGFV), and 206 to 226 (ALLP…VAFL).

It belongs to the ATPase A chain family. As to quaternary structure, F-type ATPases have 2 components, CF(1) - the catalytic core - and CF(0) - the membrane proton channel. CF(1) has five subunits: alpha(3), beta(3), gamma(1), delta(1), epsilon(1). CF(0) has four main subunits: a, b, b' and c.

It localises to the cell inner membrane. Key component of the proton channel; it plays a direct role in the translocation of protons across the membrane. The chain is ATP synthase subunit a 1 from Bradyrhizobium sp. (strain BTAi1 / ATCC BAA-1182).